A 458-amino-acid polypeptide reads, in one-letter code: MARAPAQARGSRGLNCLARSQQTGIPAQETDDLFSTCYCEETEEDTAHQEAGMTVDCLSIPKKKLAQSQKKINQFINSKMSTKANKELIRCFILSQIVFGKEHWKCAQALANLAYGYLTLRGLPAQAKKHAEKARNTLLTWKRNTTSDKDKKEILETLVRLYYTLGVAWLLQNHGKQAYIHLQKAERNMKELKELNNGNICGIQVSEKDLTIALGRASLAMHRMNLALAYFEKAICDVILDKGHNTSELISLYEEIAQIEQLRKNHKQAIQYLQQAYSICVSSFSEVSPQTAEASALLAKAYAMSGASEYRDAVEIYFIRSISTYQTLGSEDYETLTAIEDFCTWLIENGEKQEAYRLLKSTLNSGNFGDCGKKVAETFYNMGSICFAKGELGEAIELLSKCLMIQSLVYGSEHIKSIETKSLLSLLQRWRLKETLEKNRKEASGGETFQKTVITLLQ.

2 coiled-coil regions span residues 175–198 and 246–278; these read GKQA…LNNG and TSEL…QAYS.

The protein resides in the cytoplasm. Its subcellular location is the cytoskeleton. It is found in the microtubule organizing center. It localises to the centrosome. The protein localises to the spindle. The protein resides in the midbody. The polypeptide is Tetratricopeptide repeat protein 23-like (Ttc23l) (Mus musculus (Mouse)).